Here is a 387-residue protein sequence, read N- to C-terminus: 1-deoxy-D-xylulose 5-phosphate reductoisomerase (387 aa).

NADPH is bound by residues Thr10, Gly11, Ile13, Asn38, and Asn122. Position 123 (Lys123) interacts with 1-deoxy-D-xylulose 5-phosphate. Glu124 contributes to the NADPH binding site. Mn(2+) is bound at residue Asp148. The 1-deoxy-D-xylulose 5-phosphate site is built by Ser149, Glu150, Ser174, and His197. Mn(2+) is bound at residue Glu150. Gly203 contributes to the NADPH binding site. Ser210, Asn215, Lys216, and Glu219 together coordinate 1-deoxy-D-xylulose 5-phosphate. Position 219 (Glu219) interacts with Mn(2+).

Belongs to the DXR family. Mg(2+) is required as a cofactor. The cofactor is Mn(2+).

It carries out the reaction 2-C-methyl-D-erythritol 4-phosphate + NADP(+) = 1-deoxy-D-xylulose 5-phosphate + NADPH + H(+). The protein operates within isoprenoid biosynthesis; isopentenyl diphosphate biosynthesis via DXP pathway; isopentenyl diphosphate from 1-deoxy-D-xylulose 5-phosphate: step 1/6. In terms of biological role, catalyzes the NADPH-dependent rearrangement and reduction of 1-deoxy-D-xylulose-5-phosphate (DXP) to 2-C-methyl-D-erythritol 4-phosphate (MEP). The chain is 1-deoxy-D-xylulose 5-phosphate reductoisomerase from Ehrlichia ruminantium (strain Welgevonden).